A 566-amino-acid polypeptide reads, in one-letter code: Arginine--tRNA ligase (566 aa).

A 'HIGH' region motif is present at residues 123 to 133 (PNVAKPFHVGH).

This sequence belongs to the class-I aminoacyl-tRNA synthetase family. In terms of assembly, monomer.

The protein localises to the cytoplasm. It catalyses the reaction tRNA(Arg) + L-arginine + ATP = L-arginyl-tRNA(Arg) + AMP + diphosphate. The sequence is that of Arginine--tRNA ligase from Alkaliphilus metalliredigens (strain QYMF).